A 364-amino-acid chain; its full sequence is Transcription factor SPEECHLESS (364 aa).

Residues 35–109 form a disordered region; sequence GEISPTAAST…QKMSHVTVER (75 aa). Ser-38 is subject to Phosphoserine; by ASK7. Residue Thr-40 is modified to Phosphothreonine; by ASK7. Residues 40–53 show a composition bias toward polar residues; that stretch reads TAASTPKDGTTSSK. Ser-43 carries the phosphoserine; by ASK7 modification. Thr-44 carries the post-translational modification Phosphothreonine; by ASK7. A Phosphoserine; by ASK7 modification is found at Ser-65. A compositionally biased stretch (acidic residues) spans 79 to 92; sequence EDEEEEDGDGEAEE. The tract at residues 99–112 is basic motif; that stretch reads QQKMSHVTVERNRR. The bHLH domain occupies 99–150; that stretch reads QQKMSHVTVERNRRKQMNEHLTVLRSLMPCFYVKRGDQASIIGGVVEYISEL. Residues 113–150 are helix-loop-helix motif; the sequence is KQMNEHLTVLRSLMPCFYVKRGDQASIIGGVVEYISEL. Ser-171 is subject to Phosphoserine; by ASK7. Positions 171–227 are disordered; that stretch reads SPRVVPSPRPSPPVLSPRKPPLSPRINHHQIHHHLLLPPISPRTPQPTSPYRAIPPQ. Residues 175-193 are compositionally biased toward pro residues; the sequence is VPSPRPSPPVLSPRKPPLS. Ser-177 is modified (phosphoserine; by ASK7, MPK3 and MPK6). Ser-181 carries the post-translational modification Phosphoserine; by ASK7. Ser-186 carries the post-translational modification Phosphoserine; by CDKA-1, ASK7, MPK3 and MPK6. A Phosphoserine; by MPK3 and MPK6 modification is found at Ser-193. The segment covering 196–205 has biased composition (basic residues); the sequence is INHHQIHHHL. A compositionally biased stretch (pro residues) spans 209 to 218; it reads PISPRTPQPT. Ser-211 carries the post-translational modification Phosphoserine; by MPK3 and MPK6. At Thr-214 the chain carries Phosphothreonine; by ASK7, MPK3 and MPK6. Ser-219 is modified (phosphoserine; by ASK7, MPK3 and MPK6).

In terms of assembly, homodimer. Forms dimers with SCRM and SCRM2. May interact with CDKA-1. Phosphorylated by ASK7/BIN2 and ASK3/SK12; this post-translational modification inhibits activity and limit epidermal cell proliferation. Phosphorylation by MPK3 and MPK6 leads to the inhibition of stomatal fate and to degradation. Stabilized by CDKA-1-mediated phosphorylation at Ser-186 which promotes stomatal development. In terms of tissue distribution, expressed in developing leaf epidermis. Reduced accumulation in the stomatal lineage ground cells (SLGCs) where BASL is polarized in the cell cortex. Observed in small cells of non-protruding hypocotyl cell files and of developing cotyledon epidermis. Restricted to meristemoids (stomatal precursor cell) in leaves epidermis, mostly in dividing cells of non-protruding cell files.

Its subcellular location is the nucleus. Its activity is regulated as follows. Negatively regulated through phosphorylation by the MAPK module. Activity is constrained by polarized BASL in stomatal lineage ground cells (SLGCs) undergoing ACD. Its function is as follows. Transcription factor acting as an integration node for stomata and brassinosteroid (BR) signaling pathways to control stomatal initiation and development. Activates transcription when in the presence of SCRM/ICE1. Functions as a dimer with SCRM or SCRM2 during stomatal initiation. Required for the initiation, the spacing and the formation of stomata, by promoting the first asymmetric cell divisions. Together with FMA and MUTE, modulates the stomata formation. Involved in the regulation of growth reduction under osmotic stress (e.g. mannitol), associated with a quick decrease of meristemoid mother cells (MMCs) number lower stomatal index and density. This Arabidopsis thaliana (Mouse-ear cress) protein is Transcription factor SPEECHLESS.